Consider the following 276-residue polypeptide: Sulfur carrier protein FdhD (276 aa).

Cys120 acts as the Cysteine persulfide intermediate in catalysis.

This sequence belongs to the FdhD family.

It is found in the cytoplasm. Required for formate dehydrogenase (FDH) activity. Acts as a sulfur carrier protein that transfers sulfur from IscS to the molybdenum cofactor prior to its insertion into FDH. The polypeptide is Sulfur carrier protein FdhD (Bordetella bronchiseptica (strain ATCC BAA-588 / NCTC 13252 / RB50) (Alcaligenes bronchisepticus)).